A 184-amino-acid polypeptide reads, in one-letter code: Shikimate kinase (184 aa).

18-23 serves as a coordination point for ATP; that stretch reads GAGKTT. Residue Thr22 coordinates Mg(2+). Residues Asp40, Arg64, and Gly86 each coordinate substrate. Arg124 provides a ligand contact to ATP. Substrate is bound at residue Arg143. Gln160 contacts ATP.

Belongs to the shikimate kinase family. In terms of assembly, monomer. Requires Mg(2+) as cofactor.

The protein resides in the cytoplasm. The catalysed reaction is shikimate + ATP = 3-phosphoshikimate + ADP + H(+). It functions in the pathway metabolic intermediate biosynthesis; chorismate biosynthesis; chorismate from D-erythrose 4-phosphate and phosphoenolpyruvate: step 5/7. Functionally, catalyzes the specific phosphorylation of the 3-hydroxyl group of shikimic acid using ATP as a cosubstrate. The chain is Shikimate kinase from Chromobacterium violaceum (strain ATCC 12472 / DSM 30191 / JCM 1249 / CCUG 213 / NBRC 12614 / NCIMB 9131 / NCTC 9757 / MK).